The primary structure comprises 99 residues: Integration host factor subunit alpha (99 aa).

Residues 49 to 75 (FGNFDLRDKNQRPGRNPKTGEDIPITA) are disordered.

The protein belongs to the bacterial histone-like protein family. In terms of assembly, heterodimer of an alpha and a beta chain.

This protein is one of the two subunits of integration host factor, a specific DNA-binding protein that functions in genetic recombination as well as in transcriptional and translational control. In Salmonella agona (strain SL483), this protein is Integration host factor subunit alpha.